Consider the following 305-residue polypeptide: Putative glutamine--fructose-6-phosphate aminotransferase [isomerizing] (305 aa).

Cys-2 functions as the Nucleophile; for GATase activity in the catalytic mechanism. Residues Cys-2–Glu-305 form the Glutamine amidotransferase type-2 domain.

It catalyses the reaction D-fructose 6-phosphate + L-glutamine = D-glucosamine 6-phosphate + L-glutamate. The protein operates within nucleotide-sugar biosynthesis; UDP-N-acetyl-alpha-D-glucosamine biosynthesis; alpha-D-glucosamine 6-phosphate from D-fructose 6-phosphate: step 1/1. Its function is as follows. Involved in amino sugar synthesis (formation of chitin, supplies the amino sugars of asparagine-linked oligosaccharides of glycoproteins). The sequence is that of Putative glutamine--fructose-6-phosphate aminotransferase [isomerizing] from Saccharomyces cerevisiae (strain Lalvin EC1118 / Prise de mousse) (Baker's yeast).